The chain runs to 134 residues: MVSRGFGREKRLLTPRQFKAVFDSPSGKAPGKSVLLLARDNQLDHPRLGLVIGKKSVKLAVERNRIKRQIRESFRLNQDNLVGWDIVVVARKGLGDLENGELAQQFGKLWKRLARSRPSRDADVSPGTSDNPHA.

The protein belongs to the RnpA family. Consists of a catalytic RNA component (M1 or rnpB) and a protein subunit.

The enzyme catalyses Endonucleolytic cleavage of RNA, removing 5'-extranucleotides from tRNA precursor.. Functionally, RNaseP catalyzes the removal of the 5'-leader sequence from pre-tRNA to produce the mature 5'-terminus. It can also cleave other RNA substrates such as 4.5S RNA. The protein component plays an auxiliary but essential role in vivo by binding to the 5'-leader sequence and broadening the substrate specificity of the ribozyme. The chain is Ribonuclease P protein component from Ectopseudomonas mendocina (strain ymp) (Pseudomonas mendocina).